The sequence spans 637 residues: Early transcription factor 70 kDa subunit (637 aa).

One can recognise a Helicase ATP-binding domain in the interval 32 to 185 (RTIIDENRSV…GHIIDLMSEE (154 aa)). 45-52 (HIMGSGKT) serves as a coordination point for ATP. The DEXH box signature appears at 135 to 138 (DEAH). The Helicase C-terminal domain occupies 327–507 (KFKYFINRIQ…VLPFDIKKLL (181 aa)).

This sequence belongs to the helicase family. VETF subfamily. Heterodimer of a 70 kDa and a 82 kDa subunit. Part of the early transcription complex composed of ETF, RAP94/OPG109, and the DNA-directed RNA polymerase.

It localises to the virion. Functionally, acts with RNA polymerase to initiate transcription from early gene promoters. Is recruited by the RPO-associated protein of 94 kDa RAP94/OPG109 to form the early transcription complex, which also contains the core RNA polymerase. ETF heterodimer binds to early gene promoters. The protein is Early transcription factor 70 kDa subunit (OPG118) of Homo sapiens (Human).